The chain runs to 566 residues: Serine/threonine-protein kinase ppk14 (566 aa).

Residues 1–31 show a composition bias toward basic and acidic residues; the sequence is MNELHDGESSEEGRINVEDHLEEAKKDDTGH. Disordered regions lie at residues 1-39 and 60-152; these read MNEL…GTAK and SRKK…EKLK. The span at 74-85 shows a compositional bias: polar residues; it reads AANQSPSGAPES. A compositionally biased stretch (basic residues) spans 119–129; sequence SFFKSGRKKKD. Polar residues predominate over residues 134-145; sequence RNVSRSNGADTS. In terms of domain architecture, Protein kinase spans 195–485; the sequence is FEKVFLLGKG…AADVKLHPFF (291 aa). ATP is bound by residues 201 to 209 and Lys224; that span reads LGKGDVGRV. The active-site Proton acceptor is Asp320. A Phosphothreonine modification is found at Thr379. Phosphoserine is present on Ser381. Thr385 is subject to Phosphothreonine.

The protein belongs to the protein kinase superfamily. Ser/Thr protein kinase family. KIN82 subfamily.

It carries out the reaction L-seryl-[protein] + ATP = O-phospho-L-seryl-[protein] + ADP + H(+). The catalysed reaction is L-threonyl-[protein] + ATP = O-phospho-L-threonyl-[protein] + ADP + H(+). The protein is Serine/threonine-protein kinase ppk14 (ppk14) of Schizosaccharomyces pombe (strain 972 / ATCC 24843) (Fission yeast).